A 481-amino-acid polypeptide reads, in one-letter code: UDP-N-acetylmuramoyl-L-alanyl-D-glutamate--L-lysine ligase (481 aa).

Ser-42 contributes to the UDP-N-acetyl-alpha-D-muramoyl-L-alanyl-D-glutamate binding site. ATP is bound at residue 118–124 (GTKGKTT). UDP-N-acetyl-alpha-D-muramoyl-L-alanyl-D-glutamate contacts are provided by residues 160–161 (TT), Ser-187, and Arg-195. Lys-229 carries the N6-carboxylysine modification. The short motif at 404-407 (DDPN) is the L-lysine recognition motif element.

Belongs to the MurCDEF family. MurE subfamily. In terms of processing, carboxylation is probably crucial for Mg(2+) binding and, consequently, for the gamma-phosphate positioning of ATP.

The protein resides in the cytoplasm. The catalysed reaction is UDP-N-acetyl-alpha-D-muramoyl-L-alanyl-D-glutamate + L-lysine + ATP = UDP-N-acetyl-alpha-D-muramoyl-L-alanyl-gamma-D-glutamyl-L-lysine + ADP + phosphate + H(+). It participates in cell wall biogenesis; peptidoglycan biosynthesis. Functionally, catalyzes the addition of L-lysine to the nucleotide precursor UDP-N-acetylmuramoyl-L-alanyl-D-glutamate (UMAG) in the biosynthesis of bacterial cell-wall peptidoglycan. This Streptococcus pneumoniae (strain ATCC BAA-255 / R6) protein is UDP-N-acetylmuramoyl-L-alanyl-D-glutamate--L-lysine ligase.